Here is a 570-residue protein sequence, read N- to C-terminus: Sulfite reductase [NADPH] hemoprotein beta-component (570 aa).

Residues Cys434, Cys440, Cys479, and Cys483 each contribute to the [4Fe-4S] cluster site. Cys483 contributes to the siroheme binding site.

Belongs to the nitrite and sulfite reductase 4Fe-4S domain family. As to quaternary structure, alpha(8)-beta(8). The alpha component is a flavoprotein, the beta component is a hemoprotein. Siroheme is required as a cofactor. It depends on [4Fe-4S] cluster as a cofactor.

It catalyses the reaction hydrogen sulfide + 3 NADP(+) + 3 H2O = sulfite + 3 NADPH + 4 H(+). The protein operates within sulfur metabolism; hydrogen sulfide biosynthesis; hydrogen sulfide from sulfite (NADPH route): step 1/1. In terms of biological role, component of the sulfite reductase complex that catalyzes the 6-electron reduction of sulfite to sulfide. This is one of several activities required for the biosynthesis of L-cysteine from sulfate. This Salmonella typhimurium (strain LT2 / SGSC1412 / ATCC 700720) protein is Sulfite reductase [NADPH] hemoprotein beta-component (cysI).